Consider the following 388-residue polypeptide: Chorismate synthase (388 aa).

Residues R39 and R45 each coordinate NADP(+). FMN-binding positions include 130-132 (RSS), 251-252 (NA), A296, 311-315 (KPIPT), and R337.

It belongs to the chorismate synthase family. As to quaternary structure, homotetramer. The cofactor is FMNH2.

The enzyme catalyses 5-O-(1-carboxyvinyl)-3-phosphoshikimate = chorismate + phosphate. It functions in the pathway metabolic intermediate biosynthesis; chorismate biosynthesis; chorismate from D-erythrose 4-phosphate and phosphoenolpyruvate: step 7/7. In terms of biological role, catalyzes the anti-1,4-elimination of the C-3 phosphate and the C-6 proR hydrogen from 5-enolpyruvylshikimate-3-phosphate (EPSP) to yield chorismate, which is the branch point compound that serves as the starting substrate for the three terminal pathways of aromatic amino acid biosynthesis. This reaction introduces a second double bond into the aromatic ring system. This chain is Chorismate synthase, found in Streptococcus equi subsp. zooepidemicus (strain H70).